We begin with the raw amino-acid sequence, 834 residues long: Enhancer of filamentation 1 (834 aa).

The tract at residues 1 to 505 (MKYKNLMARA…HQILSQTSHD (505 aa)) is required for interaction with ITCH. An SH3 domain is found at 3–65 (YKNLMARALY…PGNRVKLLIG (63 aa)). A phosphotyrosine; by ABL1 mark is found at Tyr-92, Tyr-164, Tyr-166, Tyr-177, Tyr-189, Tyr-214, and Tyr-223. An interacts strongly with spindle-regulatory protein D1M1 region spans residues 102 to 229 (RDTIYQVPPS…KGVYAIPPSA (128 aa)). The interval 238-260 (EKDYDFPPPMRQAGRPDLRPEGV) is disordered. Tyr-279 is modified (phosphotyrosine; by ABL1). A disordered region spans residues 291 to 316 (ARRHQSLSPNHPPPQLGQSVGSQNDA). Ser-296 is subject to Phosphoserine. Positions 306–315 (LGQSVGSQND) are enriched in polar residues. Tyr-317 bears the Phosphotyrosine; by ABL1 mark. Disordered stretches follow at residues 328–398 (PPAE…SPAQ) and 560–623 (GPGS…GSER). Residues 332–344 (TSEKANPQERDGV) are compositionally biased toward basic and acidic residues. Positions 351-834 (NPPDAKGSRD…KRSLLEMATF (484 aa)) are interacts with CTTN. Positions 360 to 363 (DLVD) match the Caspase cleavage related site motif. Phosphoserine is present on Ser-369. Low complexity predominate over residues 369–395 (SFSSTGSTRSNMSTSSTSSKESSLSAS). Residues 710–760 (FYYDQCETHFISLLNAIDALFSCVSSAQPPRIFVAHSKFVILSAHKLVFIG) form a divergent helix-loop-helix motif region. The segment at 710–834 (FYYDQCETHF…KRSLLEMATF (125 aa)) is required for interaction with PLK1. Ser-780 carries the phosphoserine; by CSNK1D and CSNK1E modification. At Thr-804 the chain carries Phosphothreonine; by CSNK1E.

Belongs to the CAS family. As to quaternary structure, homodimer. Forms heterodimers with BCAR1/p130cas. Forms complexes with PTK2B/RAFTK, adapter protein CRKL and LYN kinase. Part of a complex composed of NEDD9, AURKA and CTTN; within the complex NEDD9 acts as a scaffold protein and is required for complex formation. Part of a ternary complex composed of SMAD3, ITCH/AIP4 and NEDD9/HEF1; within the complex NEDD9/HEF1 interacts (via N-terminus) with ITCH/AIP4 (via WW domains); the complex mediates ubiquitination and proteasomal degradation of NEDD9/HEF1. Interacts with SMAD3; the interaction promotes NEDD9 ubiquitination and proteasomal degradation. Interacts with ID2. Interacts with CTTN (via N-terminus). Interacts with MICAL. Interacts with TXNL4/DIM1. Interacts with BCAR3 (via Ras-GEF domain). Interacts with SH2D3C isoform 1 and isoform 2. Interacts with ECT2. Interacts with PTPN11/SHP-2 (via SH2 domains); the interaction is enhanced when NEDD9/CAS-L is tyrosine phosphorylated. Interacts (via C-terminus) with PLK1 (via polo box domains). Interacts with NKX2-5. Interacts with SMAD3; the interaction is inhibited by oxidation of NEDD9. Interacts with NEDD9/HEF1; interaction is induced by CXCL12 promotion of ABL-mediated phosphorylation of NEDD9/HEF1. Interacts (via SH3 domain) with PTK2/FAK. Interacts with FYN; in the presence of PTK2. Interacts with INPPL1/SHIP2. Cell cycle-regulated processing produces four isoforms: p115, p105, p65, and p55. Isoform p115 arises from p105 phosphorylation and appears later in the cell cycle. Isoform p55 arises from p105 as a result of cleavage at a caspase cleavage-related site and it appears specifically at mitosis. The p65 isoform is poorly detected. In terms of processing, polyubiquitinated by ITCH/AIP4, leading to proteasomal degradation. Post-translationally, PTK2/FAK1 phosphorylates the protein at the YDYVHL motif (conserved among all cas proteins) following integrin stimulation. The SRC family kinases (FYN, SRC, LCK and CRK) are recruited to the phosphorylated sites and can phosphorylate other tyrosine residues. Ligation of either integrin beta-1 or B-cell antigen receptor on tonsillar B-cells and B-cell lines promotes tyrosine phosphorylation and both integrin and BCR-mediated tyrosine phosphorylation requires an intact actin network. Phosphorylation is required to recruit NEDD9 to T-cell receptor microclusters at the periphery of newly formed immunological synapses. In fibroblasts transformation with oncogene v-ABL results in an increase in tyrosine phosphorylation. Transiently phosphorylated following CD3 cross-linking and this phosphorylated form binds to CRKL and C3G. A mutant lacking the SH3 domain is phosphorylated upon CD3 cross-linking but not upon integrin beta-1 cross-linking. Tyrosine phosphorylation occurs upon stimulation of the G-protein coupled C1a calcitonin receptor. Calcitonin-stimulated tyrosine phosphorylation is mediated by calcium- and protein kinase C-dependent mechanisms and requires the integrity of the actin cytoskeleton. Phosphorylation at Ser-369 induces proteasomal degradation. Phosphorylated by LYN. Phosphorylation at Ser-780 by CSNK1D or CSNK1E, or phosphorylation of Thr-804 by CSNK1E enhances the interaction of NEDD9 with PLK1. Expressed in B-cells (at protein level). Expressed in the respiratory epithelium of the main bronchi to the bronchioles in the lungs (at protein level). High levels detected in kidney, lung, and placenta. Expressed in lymphocytes.

The protein localises to the cytoplasm. Its subcellular location is the cell cortex. The protein resides in the nucleus. It is found in the golgi apparatus. It localises to the cell projection. The protein localises to the lamellipodium. Its subcellular location is the cell junction. The protein resides in the focal adhesion. It is found in the cytoskeleton. It localises to the spindle pole. The protein localises to the cilium. Its subcellular location is the cilium basal body. The protein resides in the basolateral cell membrane. It is found in the spindle. In terms of biological role, scaffolding protein which plays a central coordinating role for tyrosine-kinase-based signaling related to cell adhesion. As a focal adhesion protein, plays a role in embryonic fibroblast migration. May play an important role in integrin beta-1 or B cell antigen receptor (BCR) mediated signaling in B- and T-cells. Integrin beta-1 stimulation leads to recruitment of various proteins including CRKL and SHPTP2 to the tyrosine phosphorylated form. Promotes adhesion and migration of lymphocytes; as a result required for the correct migration of lymphocytes to the spleen and other secondary lymphoid organs. Plays a role in the organization of T-cell F-actin cortical cytoskeleton and the centralization of T-cell receptor microclusters at the immunological synapse. Negatively regulates cilia outgrowth in polarized cysts. Modulates cilia disassembly via activation of AURKA-mediated phosphorylation of HDAC6 and subsequent deacetylation of alpha-tubulin. Positively regulates RANKL-induced osteoclastogenesis. Required for the maintenance of hippocampal dendritic spines in the dentate gyrus and CA1 regions, thereby involved in spatial learning and memory. The polypeptide is Enhancer of filamentation 1 (Homo sapiens (Human)).